A 379-amino-acid polypeptide reads, in one-letter code: Protein psi1 (379 aa).

The J domain occupies 1–70; it reads MVADTKLYDC…RKLYDQYGIT (70 aa). Disordered regions lie at residues 69–95 and 176–205; these read ITEGNAAPPPPGAEGGPGAGFGGFPGA and FGGGGAGPHARRSHPSFGGSRPSQPPAQNE. Residues 81–95 show a composition bias toward gly residues; that stretch reads AEGGPGAGFGGFPGA.

Its function is as follows. Required for nuclear migration during mitosis. It is required for the normal initiation of translation. The polypeptide is Protein psi1 (psi1) (Schizosaccharomyces pombe (strain 972 / ATCC 24843) (Fission yeast)).